The sequence spans 126 residues: KH homology domain-containing protein 1B (126 aa).

In terms of domain architecture, KH spans P19–M78.

This sequence belongs to the KHDC1 family.

The sequence is that of KH homology domain-containing protein 1B (Khdc1b) from Mus musculus (Mouse).